A 1583-amino-acid polypeptide reads, in one-letter code: Protein mesh (1583 aa).

The first 21 residues, 1-21 (MGVKIKLVLAVVLILSANVLG), serve as a signal peptide directing secretion. At 22-1182 (QDEIVNDTES…EFSQRALFLT (1161 aa)) the chain is on the extracellular side. The region spanning 260-415 (GIYFRLDRDL…GRHIFRIDEN (156 aa)) is the NIDO domain. Positions 647–798 (GQRWSNSMCN…VGCETFRFER (152 aa)) constitute an AMOP domain. The VWFD domain maps to 811 to 1019 (GVAGIFGDPH…HWQLTDREQR (209 aa)). The Sushi domain maps to 1110 to 1170 (ISCGILETPR…PDYGYTECLR (61 aa)). Disulfide bonds link C1112-C1152 and C1138-C1168. A helical transmembrane segment spans residues 1183 to 1203 (WGVIVAVILPLGLLICLLWFW). The Cytoplasmic segment spans residues 1204-1472 (CWHKPRSEGK…QEYSSRTLGA (269 aa)). Polar residues predominate over residues 1232 to 1250 (LRSSSMGNITDTMKSSTIP). Residues 1232–1448 (LRSSSMGNIT…IPEAPKSAPV (217 aa)) form a disordered region. Residues 1291–1300 (GKSDSGKSDK) show a composition bias toward basic and acidic residues. Positions 1405-1416 (PIPSQYSPTYSE) are enriched in polar residues. The helical transmembrane segment at 1473 to 1493 (TWGIISAVMLPIIIILICVAW) threads the bilayer. The Extracellular segment spans residues 1494-1583 (RILQRRKAEE…RQWGGETEIN (90 aa)). A compositionally biased stretch (basic and acidic residues) spans 1521–1539 (DSVKVTSDDESIPYKKDVT). Positions 1521–1583 (DSVKVTSDDE…RQWGGETEIN (63 aa)) are disordered.

In terms of tissue distribution, in fifth instar larvae, expressed in midgut epithelial cells (at protein level).

It is found in the membrane. It localises to the cell junction. The protein localises to the septate junction. Its subcellular location is the lateral cell membrane. Functionally, may be required for the proper organization of smooth septate junctions and for the barrier function of the midgut epithelium. This chain is Protein mesh, found in Bombyx mori (Silk moth).